Here is an 812-residue protein sequence, read N- to C-terminus: 1,4-alpha-glucan branching enzyme GlgB (812 aa).

Polar residues predominate over residues 1–11 (MNNGDVNNGTA). The tract at residues 1-83 (MNNGDVNNGT…SALPADPPAV (83 aa)) is disordered. A compositionally biased stretch (low complexity) spans 49 to 64 (SSASAQPGQTADDPAV). Residues 65–83 (PSAPPSAPPSALPADPPAV) are compositionally biased toward pro residues. The active-site Nucleophile is Asp490. Glu543 serves as the catalytic Proton donor.

The protein belongs to the glycosyl hydrolase 13 family. GlgB subfamily. Monomer.

The enzyme catalyses Transfers a segment of a (1-&gt;4)-alpha-D-glucan chain to a primary hydroxy group in a similar glucan chain.. Its pathway is glycan biosynthesis; glycogen biosynthesis. Functionally, catalyzes the formation of the alpha-1,6-glucosidic linkages in glycogen by scission of a 1,4-alpha-linked oligosaccharide from growing alpha-1,4-glucan chains and the subsequent attachment of the oligosaccharide to the alpha-1,6 position. This Frankia casuarinae (strain DSM 45818 / CECT 9043 / HFP020203 / CcI3) protein is 1,4-alpha-glucan branching enzyme GlgB.